The primary structure comprises 619 residues: ATP-dependent zinc metalloprotease FtsH (619 aa).

Topologically, residues Met-1–Lys-5 are cytoplasmic. A helical membrane pass occupies residues Gly-6 to Ala-26. Over Thr-27–Trp-110 the chain is Extracellular. The chain crosses the membrane as a helical span at residues Val-111–Ile-131. Residues Gln-132–Gly-619 are Cytoplasmic-facing. ATP is bound at residue Gly-204–Thr-211. His-426 lines the Zn(2+) pocket. The active site involves Glu-427. Positions 430 and 502 each coordinate Zn(2+).

The protein in the central section; belongs to the AAA ATPase family. It in the C-terminal section; belongs to the peptidase M41 family. Homohexamer. It depends on Zn(2+) as a cofactor.

The protein localises to the cell membrane. Its function is as follows. Acts as a processive, ATP-dependent zinc metallopeptidase for both cytoplasmic and membrane proteins. Plays a role in the quality control of integral membrane proteins. The sequence is that of ATP-dependent zinc metalloprotease FtsH from Ruminiclostridium cellulolyticum (strain ATCC 35319 / DSM 5812 / JCM 6584 / H10) (Clostridium cellulolyticum).